Consider the following 83-residue polypeptide: ATP synthase subunit c (83 aa).

2 helical membrane-spanning segments follow: residues 9–29 (LICVGAALSIGLAGLGAGIGI) and 51–71 (MVFMILGMALAESIAIYGLVI).

The protein belongs to the ATPase C chain family. F-type ATPases have 2 components, F(1) - the catalytic core - and F(0) - the membrane proton channel. F(1) has five subunits: alpha(3), beta(3), gamma(1), delta(1), epsilon(1). F(0) has three main subunits: a(1), b(2) and c(10-14). The alpha and beta chains form an alternating ring which encloses part of the gamma chain. F(1) is attached to F(0) by a central stalk formed by the gamma and epsilon chains, while a peripheral stalk is formed by the delta and b chains.

It is found in the cell inner membrane. F(1)F(0) ATP synthase produces ATP from ADP in the presence of a proton or sodium gradient. F-type ATPases consist of two structural domains, F(1) containing the extramembraneous catalytic core and F(0) containing the membrane proton channel, linked together by a central stalk and a peripheral stalk. During catalysis, ATP synthesis in the catalytic domain of F(1) is coupled via a rotary mechanism of the central stalk subunits to proton translocation. In terms of biological role, key component of the F(0) channel; it plays a direct role in translocation across the membrane. A homomeric c-ring of between 10-14 subunits forms the central stalk rotor element with the F(1) delta and epsilon subunits. The chain is ATP synthase subunit c from Desulfotalea psychrophila (strain LSv54 / DSM 12343).